A 246-amino-acid polypeptide reads, in one-letter code: Probable transcriptional regulatory protein YebC (246 aa).

The disordered stretch occupies residues 1–20 (MAGHSKWANTRHRKAAQDAK).

It belongs to the TACO1 family.

The protein localises to the cytoplasm. This chain is Probable transcriptional regulatory protein YebC, found in Escherichia coli O6:K15:H31 (strain 536 / UPEC).